We begin with the raw amino-acid sequence, 968 residues long: MHERHIGPSQEEIDHMLGFLGYKSLDDLMHAALPNGVQSPPDIKIPSHDELTCLTQLAAFAKMNRIKTSMLGQGFYNCITPAVIRRNILENPSWYTSYTPYQPEISQGRLEMLINFQTMICDLTGLEIANASMLDEASCAAEAMLLAKRVSRSSSNKYLVHNGVFPHIRRVLETRADAVGVEIVDLPEGQSIDFDHFGVYAQYQSASGKLLDLRPLFSRSKRAGAICVIGCDLLMLTLFTSPGELGADIAFGSAQRFGIPMNFGGPLASFLAARKAMERSLPGRLVGVSVDADSNHAYRLTLQTREQHIRREKATSNICTATVLMAIAAVAFAQHHGPKGLRAIAHRINTVAVGFARLLKQTAFRVSSLDIFDTIEINNPTQVCVEAESKYDLLFWKVDDNKLRITFDEVTARLDGDLPERLSKVFGISPDKIRDLGCNYDSCDCSFYGDLQQAREGLSSVASRNISVHSDLARHPLRRFSGYLKHPVFNNYTGEVALMRYLKALSDKDFALDRGMIPLGSCTMKLNAAFQLEPVLWPEFANLHPFAPLGDADGTLQIIDQIETWLANLSGYDAVSLQPTAGSQGELAGLLAIRGYYKSLNLDRDVCLIPASAHGTNAASAVLAGMRVVVVACDQQGNIDLDDLRLKASKNAHALAALMVTYPSTHGVYEDNISEVCSVVHKYGGQVYVDGANSNALIGYLRTGDFGGDVSHLNLHKTFGIPHGGGGPGIGPVVAKAHLAPFLPFRNRVHKPSTDLPAVKHMGGPIASSDYGFAGALYISWAYIFCLGSQGMKRCTAVAVLVANYIAKQLSDTFPVLYTGKNNLVAHEFIMDFREVTRVSGITVDDVCKRLIDYGFHAPTMSFPVPGTLMVEPTESEPFSEIQRFIKTIRSIRAEIDRVIDKTYDPDNNPLKRAPHTLEQIASDKWDRPYSRRTGIVYTSGKYWPASARIDNAYGDRNIFCTCPDLPD.

Residue lysine 717 is modified to N6-(pyridoxal phosphate)lysine.

The protein belongs to the GcvP family. In terms of assembly, the glycine cleavage system is composed of four proteins: P, T, L and H. Pyridoxal 5'-phosphate is required as a cofactor.

It catalyses the reaction N(6)-[(R)-lipoyl]-L-lysyl-[glycine-cleavage complex H protein] + glycine + H(+) = N(6)-[(R)-S(8)-aminomethyldihydrolipoyl]-L-lysyl-[glycine-cleavage complex H protein] + CO2. Functionally, the glycine cleavage system catalyzes the degradation of glycine. The P protein binds the alpha-amino group of glycine through its pyridoxal phosphate cofactor; CO(2) is released and the remaining methylamine moiety is then transferred to the lipoamide cofactor of the H protein. The sequence is that of Glycine dehydrogenase (decarboxylating) from Tropheryma whipplei (strain TW08/27) (Whipple's bacillus).